The primary structure comprises 260 residues: Neurotrophin-3 (260 aa).

The first 18 residues, 1-18 (MSILFYVMFLPYLCGIHA), serve as a signal peptide directing secretion. Residues 19–141 (TNMDKRNLPE…VNNRTSRRKR (123 aa)) constitute a propeptide that is removed on maturation. N134 is a glycosylation site (N-linked (GlcNAc...) asparagine). Disulfide bonds link C155-C220, C198-C249, and C208-C251.

The protein belongs to the NGF-beta family.

Its subcellular location is the secreted. Seems to promote the survival of visceral and proprioceptive sensory neurons. The protein is Neurotrophin-3 (ntf3) of Xenopus laevis (African clawed frog).